Reading from the N-terminus, the 478-residue chain is Ribosomal RNA small subunit methyltransferase F (478 aa).

S-adenosyl-L-methionine-binding positions include 123–129 (AAAPGSK), Glu147, Asp174, and Asp192. Cys245 serves as the catalytic Nucleophile.

Belongs to the class I-like SAM-binding methyltransferase superfamily. RsmB/NOP family.

Its subcellular location is the cytoplasm. It catalyses the reaction cytidine(1407) in 16S rRNA + S-adenosyl-L-methionine = 5-methylcytidine(1407) in 16S rRNA + S-adenosyl-L-homocysteine + H(+). Functionally, specifically methylates the cytosine at position 1407 (m5C1407) of 16S rRNA. The sequence is that of Ribosomal RNA small subunit methyltransferase F from Vibrio campbellii (strain ATCC BAA-1116).